Reading from the N-terminus, the 270-residue chain is Orotidine 5'-phosphate decarboxylase (270 aa).

Residues aspartate 39, 61-63 (KTH), 93-102 (DRKFADIGNT), tyrosine 221, and arginine 239 contribute to the substrate site. Catalysis depends on lysine 95, which acts as the Proton donor.

The protein belongs to the OMP decarboxylase family.

It carries out the reaction orotidine 5'-phosphate + H(+) = UMP + CO2. It functions in the pathway pyrimidine metabolism; UMP biosynthesis via de novo pathway; UMP from orotate: step 2/2. The chain is Orotidine 5'-phosphate decarboxylase (URA3) from Candida albicans (strain SC5314 / ATCC MYA-2876) (Yeast).